The primary structure comprises 440 residues: Protein disulfide-isomerase A6 homolog (440 aa).

An N-terminal signal peptide occupies residues 1-18; sequence MALIKLLLASLAITSVCG. Thioredoxin domains lie at 19–131 and 127–273; these read MYSK…AEAK and LAEA…ARAQ. Active-site nucleophile residues include cysteine 54 and cysteine 57. An intrachain disulfide couples cysteine 54 to cysteine 57. The interval 138-164 is disordered; the sequence is LGGKSSGSSSSGSGSGSGKRGGGGSGN. Positions 139–149 are enriched in low complexity; it reads GGKSSGSSSSG. A compositionally biased stretch (gly residues) spans 150–163; that stretch reads SGSGSGKRGGGGSG. Active-site nucleophile residues include cysteine 194 and cysteine 197. Cysteine 194 and cysteine 197 are oxidised to a cystine. Residues 404 to 426 form a disordered region; it reads DGFPKIQKTEKWDGKDGALPAED. Basic and acidic residues predominate over residues 410–419; sequence QKTEKWDGKD. Positions 437–440 match the Prevents secretion from ER motif; the sequence is KTEL.

Belongs to the protein disulfide isomerase family.

Its subcellular location is the endoplasmic reticulum lumen. The catalysed reaction is Catalyzes the rearrangement of -S-S- bonds in proteins.. In terms of biological role, may function as a chaperone that inhibits aggregation of misfolded proteins. May negatively regulate the unfolded protein response (UPR) through binding to UPR sensors. This Caenorhabditis elegans protein is Protein disulfide-isomerase A6 homolog.